A 318-amino-acid chain; its full sequence is Deoxyribose-phosphate aldolase (318 aa).

Catalysis depends on D155, which acts as the Proton donor/acceptor. The Schiff-base intermediate with acetaldehyde role is filled by K218. Catalysis depends on K254, which acts as the Proton donor/acceptor.

It belongs to the DeoC/FbaB aldolase family. DeoC type 2 subfamily. In terms of assembly, interacts with YBX1. In terms of tissue distribution, mainly expressed in liver, lung and colon.

It localises to the cytoplasm. The protein localises to the cytoplasmic granule. Its subcellular location is the nucleus. It carries out the reaction 2-deoxy-D-ribose 5-phosphate = D-glyceraldehyde 3-phosphate + acetaldehyde. Its pathway is carbohydrate degradation; 2-deoxy-D-ribose 1-phosphate degradation; D-glyceraldehyde 3-phosphate and acetaldehyde from 2-deoxy-alpha-D-ribose 1-phosphate: step 2/2. Its function is as follows. Catalyzes a reversible aldol reaction between acetaldehyde and D-glyceraldehyde 3-phosphate to generate 2-deoxy-D-ribose 5-phosphate. Participates in stress granule (SG) assembly. May allow ATP production from extracellular deoxyinosine in conditions of energy deprivation. This Homo sapiens (Human) protein is Deoxyribose-phosphate aldolase (DERA).